We begin with the raw amino-acid sequence, 448 residues long: Protein EVI2B (448 aa).

The first 21 residues, 1 to 21, serve as a signal peptide directing secretion; that stretch reads MDPKYFILILFCGHLNNTFFS. Residues N16 and N50 are each glycosylated (N-linked (GlcNAc...) asparagine). Over 22 to 202 the chain is Extracellular; sequence KTETITTEKQ…QTPQKNNYNS (181 aa). The interval 74-108 is disordered; sequence AKVTAGQPTPAVYTSSEKPEAHTSAGQPLAYNTKQ. Residues 97–108 are compositionally biased toward polar residues; that stretch reads SAGQPLAYNTKQ. N-linked (GlcNAc...) asparagine glycosylation is present at N114. The chain crosses the membrane as a helical span at residues 203-226; the sequence is IAAILIGVLLTSMLVAIIIIVLWK. The Cytoplasmic segment spans residues 227–448; it reads CLRKPVLNDQ…SLPPPPAELL (222 aa). T249 is modified (phosphothreonine). S268, S271, S278, and S294 each carry phosphoserine. Disordered stretches follow at residues 298 to 372 and 427 to 448; these read IEDS…DSTS and SIPPNSDQDLNESLPPPPAELL. Polar residues-rich tracts occupy residues 313–333 and 350–372; these read VNGTSEDSADGSTVGTAVSSS and QESNQSDKPTMTIVSPLPNDSTS.

As to expression, bone marrow, peripheral blood mononuclear cells, fibroblasts and Epstein-Barr virus-transformed lymphoblastoid cell lines. Strongly expressed in granulocytic cells, and weakly on lymphocytes cells.

The protein localises to the membrane. Functionally, required for granulocyte differentiation and functionality of hematopoietic progenitor cells through the control of cell cycle progression and survival of hematopoietic progenitor cells. The chain is Protein EVI2B from Homo sapiens (Human).